A 725-amino-acid chain; its full sequence is Glutamine-dependent NAD(+) synthetase (725 aa).

The CN hydrolase domain occupies 4–274 (LKVATCNLNQ…VEVIISQVDL (271 aa)). The active-site Proton acceptor; for glutaminase activity is the Glu-44. Lys-113 (for glutaminase activity) is an active-site residue. Cys-174 serves as the catalytic Nucleophile; for glutaminase activity. The tract at residues 324–709 (YHSPQEEIAF…FPEEEANSNK (386 aa)) is ligase. 354 to 361 (PLSGGADS) lines the ATP pocket. Ser-356 is a catalytic residue.

It in the C-terminal section; belongs to the NAD synthetase family.

The catalysed reaction is deamido-NAD(+) + L-glutamine + ATP + H2O = L-glutamate + AMP + diphosphate + NAD(+) + H(+). The protein operates within cofactor biosynthesis; NAD(+) biosynthesis; NAD(+) from deamido-NAD(+) (L-Gln route): step 1/1. The chain is Glutamine-dependent NAD(+) synthetase from Arabidopsis thaliana (Mouse-ear cress).